A 525-amino-acid chain; its full sequence is Glutamate--cysteine ligase (525 aa).

The protein belongs to the glutamate--cysteine ligase type 1 family. Type 1 subfamily.

It carries out the reaction L-cysteine + L-glutamate + ATP = gamma-L-glutamyl-L-cysteine + ADP + phosphate + H(+). The protein operates within sulfur metabolism; glutathione biosynthesis; glutathione from L-cysteine and L-glutamate: step 1/2. The protein is Glutamate--cysteine ligase of Pseudomonas putida (strain W619).